The sequence spans 182 residues: Probable inosine/xanthosine triphosphatase (182 aa).

Positions 42 and 69 each coordinate Mg(2+).

It belongs to the YjjX NTPase family. As to quaternary structure, homodimer. Requires Mg(2+) as cofactor. It depends on Mn(2+) as a cofactor.

It carries out the reaction XTP + H2O = XDP + phosphate + H(+). It catalyses the reaction ITP + H2O = IDP + phosphate + H(+). In terms of biological role, phosphatase that hydrolyzes non-canonical purine nucleotides such as XTP and ITP to their respective diphosphate derivatives. Probably excludes non-canonical purines from DNA/RNA precursor pool, thus preventing their incorporation into DNA/RNA and avoiding chromosomal lesions. This Methanothermobacter thermautotrophicus (strain ATCC 29096 / DSM 1053 / JCM 10044 / NBRC 100330 / Delta H) (Methanobacterium thermoautotrophicum) protein is Probable inosine/xanthosine triphosphatase.